Consider the following 705-residue polypeptide: Polyribonucleotide nucleotidyltransferase (705 aa).

Mg(2+) contacts are provided by Asp486 and Asp492. In terms of domain architecture, KH spans Pro553–Ile612. Positions Gly622–Lys690 constitute an S1 motif domain.

Belongs to the polyribonucleotide nucleotidyltransferase family. In terms of assembly, component of the RNA degradosome, which is a multiprotein complex involved in RNA processing and mRNA degradation. The cofactor is Mg(2+).

It localises to the cytoplasm. It catalyses the reaction RNA(n+1) + phosphate = RNA(n) + a ribonucleoside 5'-diphosphate. Its function is as follows. Involved in mRNA degradation. Catalyzes the phosphorolysis of single-stranded polyribonucleotides processively in the 3'- to 5'-direction. This chain is Polyribonucleotide nucleotidyltransferase, found in Yersinia pseudotuberculosis serotype O:3 (strain YPIII).